The sequence spans 276 residues: Mitochondrial distribution and morphology protein 12 (276 aa).

The SMP-LTD domain occupies 1 to 276 (MSIDIQWNLL…FVWPSYFTLY (276 aa)). The disordered stretch occupies residues 68–104 (TLYSDDSSSLDDEESDREEENMTELPPYGATENGVHK). Residues 75 to 89 (SSLDDEESDREEENM) are compositionally biased toward acidic residues.

The protein belongs to the MDM12 family. As to quaternary structure, component of the ER-mitochondria encounter structure (ERMES) or MDM complex, composed of mmm1, mdm10, mdm12 and mdm34. A mmm1 homodimer associates with one molecule of mdm12 on each side in a pairwise head-to-tail manner, and the SMP-LTD domains of mmm1 and mdm12 generate a continuous hydrophobic tunnel for phospholipid trafficking.

Its subcellular location is the mitochondrion outer membrane. It is found in the endoplasmic reticulum membrane. Functionally, component of the ERMES/MDM complex, which serves as a molecular tether to connect the endoplasmic reticulum (ER) and mitochondria. Components of this complex are involved in the control of mitochondrial shape and protein biogenesis, and function in nonvesicular lipid trafficking between the ER and mitochondria. Mdm12 is required for the interaction of the ER-resident membrane protein mmm1 and the outer mitochondrial membrane-resident beta-barrel protein mdm10. The mdm12-mmm1 subcomplex functions in the major beta-barrel assembly pathway that is responsible for biogenesis of all mitochondrial outer membrane beta-barrel proteins, and acts in a late step after the SAM complex. The mdm10-mdm12-mmm1 subcomplex further acts in the TOM40-specific pathway after the action of the mdm12-mmm1 complex. Essential for establishing and maintaining the structure of mitochondria and maintenance of mtDNA nucleoids. The protein is Mitochondrial distribution and morphology protein 12 of Schizosaccharomyces japonicus (strain yFS275 / FY16936) (Fission yeast).